The sequence spans 323 residues: Methionyl-tRNA formyltransferase (323 aa).

Residue 118-121 (SLLP) coordinates (6S)-5,6,7,8-tetrahydrofolate.

Belongs to the Fmt family.

It catalyses the reaction L-methionyl-tRNA(fMet) + (6R)-10-formyltetrahydrofolate = N-formyl-L-methionyl-tRNA(fMet) + (6S)-5,6,7,8-tetrahydrofolate + H(+). Functionally, attaches a formyl group to the free amino group of methionyl-tRNA(fMet). The formyl group appears to play a dual role in the initiator identity of N-formylmethionyl-tRNA by promoting its recognition by IF2 and preventing the misappropriation of this tRNA by the elongation apparatus. The polypeptide is Methionyl-tRNA formyltransferase (Buchnera aphidicola subsp. Baizongia pistaciae (strain Bp)).